The chain runs to 194 residues: Peroxynitrite isomerase 1 (194 aa).

The short motif at 40 to 46 (GVWRGEG) is the GXWXGXG element. Residues K157 and H184 each contribute to the heme b site.

The protein belongs to the nitrobindin family. Homodimer. Requires heme b as cofactor.

It catalyses the reaction peroxynitrite = nitrate. Its pathway is nitrogen metabolism. Functionally, heme-binding protein able to scavenge peroxynitrite and to protect free L-tyrosine against peroxynitrite-mediated nitration, by acting as a peroxynitrite isomerase that converts peroxynitrite to nitrate. Therefore, this protein likely plays a role in peroxynitrite sensing and in the detoxification of reactive nitrogen and oxygen species (RNS and ROS, respectively). Is able to bind nitric oxide (NO) in vitro, but may act as a sensor of peroxynitrite levels in vivo. The polypeptide is Peroxynitrite isomerase 1 (Mycobacterium ulcerans (strain Agy99)).